The sequence spans 104 residues: Ycf49-like protein (104 aa).

Helical transmembrane passes span 6 to 26 (IPTW…IALV), 41 to 61 (LAWG…WHFF), and 73 to 93 (LQAL…WWIY).

It belongs to the ycf49 family.

The protein resides in the cell membrane. The protein is Ycf49-like protein of Synechocystis sp. (strain ATCC 27184 / PCC 6803 / Kazusa).